The chain runs to 656 residues: Kinesin-related protein SMY1 (656 aa).

A Kinesin motor domain is found at 27-364 (HIEVILRAIP…LEFGDSIRQI (338 aa)). 114 to 121 (GPSFSGKS) is a binding site for ATP. Threonine 583 carries the post-translational modification Phosphothreonine.

This sequence belongs to the TRAFAC class myosin-kinesin ATPase superfamily. Kinesin family.

It localises to the cytoplasm. Its subcellular location is the cytoskeleton. Possible microtubule-based motor that can interact or substitute with myosin 2 (MYO2). The chain is Kinesin-related protein SMY1 (SMY1) from Saccharomyces cerevisiae (strain ATCC 204508 / S288c) (Baker's yeast).